The primary structure comprises 119 residues: Promotilin (119 aa).

The N-terminal stretch at 1–25 (MVSRKAVVVLLVVHAAAMLASHTEA) is a signal peptide. The interval 40 to 72 (EKERNKGQKKSLSVQQASEELGPLDPSEPTKEE) is disordered.

The protein belongs to the motilin family.

Its subcellular location is the secreted. In terms of biological role, plays an important role in the regulation of interdigestive gastrointestinal motility and indirectly causes rhythmic contraction of duodenal and colonic smooth muscle. This chain is Promotilin (MLN), found in Sus scrofa (Pig).